The sequence spans 461 residues: Ribitol-5-phosphate transferase FKTN (461 aa).

The Cytoplasmic portion of the chain corresponds to 1–7 (MSRINKN). The interval 6 to 27 (KNVVLALLTLTSSAFLLFQLYY) is required and sufficient for interaction with POMGNT1. Residues 8–28 (VVLALLTLTSSAFLLFQLYYY) traverse the membrane as a helical; Signal-anchor for type II membrane protein segment. Residues 29–461 (KHYLSARNGP…SEWDEVIQLY (433 aa)) are Lumenal-facing. Asn92 is a glycosylation site (N-linked (GlcNAc...) asparagine).

It belongs to the LicD transferase family. In terms of assembly, forms a complex composed of FKTN/fukutin, FKRP and RXYLT1/TMEM5. Interacts (via transmembrane domain) with POMGNT1; the interaction is direct and is required for normal POMGNT1 location in Golgi membranes. Expressed in the retina, with highest levels found in the inner segments of photoreceptors and the outer plexiform layer (at protein level). Expressed at lower levels in the inner and outer nuclear layers, the inner plexiform layers, and the ganglion cell layers of the retina (at protein level). Expressed in the heart, brain, spleen, lung, liver, skeletal muscle, kidney and testis.

The protein resides in the golgi apparatus membrane. The protein localises to the cytoplasm. Its subcellular location is the nucleus. It is found in the endoplasmic reticulum. The enzyme catalyses 3-O-[beta-D-GalNAc-(1-&gt;3)-beta-D-GlcNAc-(1-&gt;4)-(O-6-P-alpha-D-Man)]-Thr-[protein] + CDP-L-ribitol = 3-O-[Rib-ol-P-3-beta-D-GalNAc-(1-&gt;3)-beta-D-GlcNAc-(1-&gt;4)-(O-6-P-alpha-D-Man)]-Thr-[protein] + CMP + H(+). It functions in the pathway protein modification; protein glycosylation. Its function is as follows. Catalyzes the transfer of CDP-ribitol to the distal N-acetylgalactosamine of the phosphorylated O-mannosyl trisaccharide (N-acetylgalactosamine-beta-3-N-acetylglucosamine-beta-4-(phosphate-6-)mannose), a carbohydrate structure present in alpha-dystroglycan (DAG1). This constitutes the first step in the formation of the ribitol 5-phosphate tandem repeat which links the phosphorylated O-mannosyl trisaccharide to the ligand binding moiety composed of repeats of 3-xylosyl-alpha-1,3-glucuronic acid-beta-1. Required for normal location of POMGNT1 in Golgi membranes, and for normal POMGNT1 activity. May interact with and reinforce a large complex encompassing the outside and inside of muscle membranes. Could be involved in brain development. In Mus musculus (Mouse), this protein is Ribitol-5-phosphate transferase FKTN.